A 93-amino-acid polypeptide reads, in one-letter code: Large ribosomal subunit protein uL23cz/uL23cy (93 aa).

Belongs to the universal ribosomal protein uL23 family. As to quaternary structure, part of the 50S ribosomal subunit.

Its subcellular location is the plastid. It localises to the chloroplast. In terms of biological role, binds to 23S rRNA. The polypeptide is Large ribosomal subunit protein uL23cz/uL23cy (rpl23-A) (Piper cenocladum (Ant piper)).